Here is a 66-residue protein sequence, read N- to C-terminus: Large ribosomal subunit protein bL35 (66 aa).

A compositionally biased stretch (basic residues) spans 1–46 (MPKMKTHRASAKRFKRTANGGLKRHHAFTGHRFHGKTKKQRRHLRK). The disordered stretch occupies residues 1–52 (MPKMKTHRASAKRFKRTANGGLKRHHAFTGHRFHGKTKKQRRHLRKPAMVSR).

This sequence belongs to the bacterial ribosomal protein bL35 family.

This chain is Large ribosomal subunit protein bL35, found in Lactobacillus acidophilus (strain ATCC 700396 / NCK56 / N2 / NCFM).